The primary structure comprises 485 residues: Glutamyl-tRNA(Gln) amidotransferase subunit A (485 aa).

Active-site charge relay system residues include Lys-79 and Ser-154. The active-site Acyl-ester intermediate is Ser-178.

It belongs to the amidase family. GatA subfamily. As to quaternary structure, heterotrimer of A, B and C subunits.

It catalyses the reaction L-glutamyl-tRNA(Gln) + L-glutamine + ATP + H2O = L-glutaminyl-tRNA(Gln) + L-glutamate + ADP + phosphate + H(+). Its function is as follows. Allows the formation of correctly charged Gln-tRNA(Gln) through the transamidation of misacylated Glu-tRNA(Gln) in organisms which lack glutaminyl-tRNA synthetase. The reaction takes place in the presence of glutamine and ATP through an activated gamma-phospho-Glu-tRNA(Gln). The chain is Glutamyl-tRNA(Gln) amidotransferase subunit A from Clostridium botulinum (strain Loch Maree / Type A3).